The chain runs to 49 residues: uncharacterized protein (49 aa).

A helical membrane pass occupies residues 6-28; it reads IYPLTVFYFFAIEMSVFCYYNWF.

It localises to the membrane. This is an uncharacterized protein from Saccharomyces cerevisiae (strain ATCC 204508 / S288c) (Baker's yeast).